The following is a 232-amino-acid chain: E3 ubiquitin-protein ligase RNF125 (232 aa).

A compositionally biased stretch (polar residues) spans 1–10; the sequence is MGSVLSSDSG. The interval 1–27 is disordered; sequence MGSVLSSDSGKSAPPSATPRALERRGD. Residue Gly2 is the site of N-myristoyl glycine attachment. Zn(2+)-binding residues include Cys37 and Cys40. An RING-type zinc finger spans residues 37–76; it reads CAVCLEVLHQPVRTRCGHVFCRSCIATSLKNNKWTCPYCR. Positions 43-45 are interaction with the C2HC RNF-type zinc finger; sequence VLH. The Zn(2+) site is built by Cys52, His54, Cys57, Cys60, Cys72, Cys75, Cys100, and Cys103. The C2HC RNF-type zinc finger occupies 100 to 119; that stretch reads CAECDTLVCLGEMRAHIRTC. Positions 109–113 are interaction with the RING-type zinc finger; it reads LGEMR. Zn(2+) is bound by residues His115 and Cys119. Positions 120–128 are linker region; sequence QKYIDKYGP. A required for interaction with ubiquitin and for autoubiquitination region spans residues 210–224; that stretch reads EEALIRRVLDRSLLE.

Interacts with UBE2D1. Interacts with VCP/p97; leading to recruit RNF125 to RIGI and promote ubiquitination of RIGI. Autoubiquitinated, leading to its subsequent proteasomal degradation.

Its subcellular location is the golgi apparatus membrane. The catalysed reaction is S-ubiquitinyl-[E2 ubiquitin-conjugating enzyme]-L-cysteine + [acceptor protein]-L-lysine = [E2 ubiquitin-conjugating enzyme]-L-cysteine + N(6)-ubiquitinyl-[acceptor protein]-L-lysine.. It functions in the pathway protein modification; protein ubiquitination. E3 ubiquitin-protein ligase that mediates ubiquitination and subsequent proteasomal degradation of target proteins, such as RIGI, MAVS/IPS1, IFIH1/MDA5, JAK1 and p53/TP53. Acts as a negative regulator of type I interferon production by mediating ubiquitination of RIGI at 'Lys-181', leading to RIGI degradation. Mediates ubiquitination and subsequent degradation of p53/TP53. Mediates ubiquitination and subsequent degradation of JAK1. Acts as a positive regulator of T-cell activation. This chain is E3 ubiquitin-protein ligase RNF125 (RNF125), found in Macaca fascicularis (Crab-eating macaque).